We begin with the raw amino-acid sequence, 357 residues long: Peptide chain release factor 1 (357 aa).

At glutamine 233 the chain carries N5-methylglutamine.

Belongs to the prokaryotic/mitochondrial release factor family. Post-translationally, methylated by PrmC. Methylation increases the termination efficiency of RF1.

The protein resides in the cytoplasm. In terms of biological role, peptide chain release factor 1 directs the termination of translation in response to the peptide chain termination codons UAG and UAA. This is Peptide chain release factor 1 from Flavobacterium psychrophilum (strain ATCC 49511 / DSM 21280 / CIP 103535 / JIP02/86).